The following is a 304-amino-acid chain: N-acetyl-D-glucosamine kinase (304 aa).

Residues 4-11 (GFDIGGTK) and 133-140 (GFGGGLIF) contribute to the ATP site. 4 residues coordinate Zn(2+): histidine 157, cysteine 178, cysteine 180, and cysteine 185.

The protein belongs to the ROK (NagC/XylR) family. NagK subfamily.

It catalyses the reaction N-acetyl-D-glucosamine + ATP = N-acetyl-D-glucosamine 6-phosphate + ADP + H(+). The protein operates within cell wall biogenesis; peptidoglycan recycling. Its function is as follows. Catalyzes the phosphorylation of N-acetyl-D-glucosamine (GlcNAc) derived from cell-wall degradation, yielding GlcNAc-6-P. The protein is N-acetyl-D-glucosamine kinase of Pasteurella multocida (strain Pm70).